Here is a 543-residue protein sequence, read N- to C-terminus: Glucose-6-phosphate isomerase (543 aa).

Glu353 functions as the Proton donor in the catalytic mechanism. Catalysis depends on residues His384 and Lys504.

Belongs to the GPI family.

The protein resides in the cytoplasm. It carries out the reaction alpha-D-glucose 6-phosphate = beta-D-fructose 6-phosphate. It functions in the pathway carbohydrate biosynthesis; gluconeogenesis. The protein operates within carbohydrate degradation; glycolysis; D-glyceraldehyde 3-phosphate and glycerone phosphate from D-glucose: step 2/4. In terms of biological role, catalyzes the reversible isomerization of glucose-6-phosphate to fructose-6-phosphate. In Roseiflexus castenholzii (strain DSM 13941 / HLO8), this protein is Glucose-6-phosphate isomerase.